A 344-amino-acid chain; its full sequence is MAP3K12-binding inhibitory protein 1 (344 aa).

At serine 91 the chain carries Phosphoserine. Glycyl lysine isopeptide (Lys-Gly) (interchain with G-Cter in SUMO2) cross-links involve residues lysine 94, lysine 118, lysine 129, lysine 139, lysine 153, and lysine 235. The segment at 172–344 (AEINENNVRE…AESMATHHLP (173 aa)) is interaction with MAP3K12. Residues 271 to 285 (IYQRIKKLEDKILEL) are leucine-zipper 1. An N6-acetyllysine; alternate modification is found at lysine 301. Lysine 301 is covalently cross-linked (Glycyl lysine isopeptide (Lys-Gly) (interchain with G-Cter in SUMO2); alternate). Residues lysine 304 and lysine 325 each participate in a glycyl lysine isopeptide (Lys-Gly) (interchain with G-Cter in SUMO2) cross-link. A leucine-zipper 2 region spans residues 314–329 (LAELDEKISALKQALL).

As to quaternary structure, component of the ADA2A-containing complex (ATAC), composed of KAT14, KAT2A, TADA2L, TADA3L, ZZ3, MBIP, WDR5, YEATS2, CCDC101 and DR1. In the complex, it probably interacts directly with KAT2A, KAT14 and WDR5. In terms of tissue distribution, ubiquitous. High expression seen in the heart and lung.

The protein resides in the nucleus. It localises to the cytoplasm. Inhibits the MAP3K12 activity to induce the activation of the JNK/SAPK pathway. Component of the ATAC complex, a complex with histone acetyltransferase activity on histones H3 and H4. This is MAP3K12-binding inhibitory protein 1 (MBIP) from Homo sapiens (Human).